Here is a 444-residue protein sequence, read N- to C-terminus: Zinc finger CCCH domain-containing protein 63 (444 aa).

C3H1-type zinc fingers lie at residues 56–84, 101–129, and 147–175; these read RIGEPDCSYYMRTGLCRFGMTCKFNHPAD, RIGQPECQYYLKTGTCKFGATCKFHHPRE, and RPNEKECAYYLRTGQCKFGSTCKFHHPQP. The interval 251 to 276 is disordered; it reads GSSSSDDQQRTAGGAQYYTGSRHSET. 2 C3H1-type zinc fingers span residues 309–337 and 355–383; these read RPDQPECQFYMKTGDCKFGAVCKFHHPKE and RPGEPICTFYSRYGICKFGPNCKFDHPMG. Residues 405 to 444 form a disordered region; the sequence is PVPAHSEVSPDNVSGRSRRITHSDSQQIPSGERGTEREAS.

The polypeptide is Zinc finger CCCH domain-containing protein 63 (Oryza sativa subsp. japonica (Rice)).